The sequence spans 658 residues: ATP-dependent RNA helicase MSS116, mitochondrial (658 aa).

A mitochondrion-targeting transit peptide spans 1–35 (MFRVTGIATARAVALQPFRAPLGVIRRFGISATAS). Residues 40 to 79 (HGHDMQSRNGSRWDSRRQGDRRSSRWEGRGSDREDGERGS) show a composition bias toward basic and acidic residues. Residues 40–104 (HGHDMQSRNG…DGAAREGFSL (65 aa)) are disordered. The short motif at 126–154 (TLVEEGVLSNELYEMLQSRGFDKLTPVQQ) is the Q motif element. Residues 158-343 (KPILQTEHDV…NSIMNHAKCL (186 aa)) enclose the Helicase ATP-binding domain. Residue 171–178 (AKTGTGKT) participates in ATP binding. The DEAD box motif lies at 284–287 (DEAD). The Helicase C-terminal domain occupies 372-528 (NITASLYKIR…TFDAAAQELS (157 aa)).

This sequence belongs to the DEAD box helicase family. DDX18/HAS1 subfamily.

The protein resides in the mitochondrion matrix. It carries out the reaction ATP + H2O = ADP + phosphate + H(+). Functionally, ATP-dependent RNA helicase required for mitochondrial splicing of group I and II introns. Also required for efficient mitochondrial translation. The chain is ATP-dependent RNA helicase MSS116, mitochondrial (MSS116) from Eremothecium gossypii (strain ATCC 10895 / CBS 109.51 / FGSC 9923 / NRRL Y-1056) (Yeast).